The sequence spans 230 residues: tRNA (guanine-N(7)-)-methyltransferase (230 aa).

4 residues coordinate S-adenosyl-L-methionine: Glu61, Glu86, Asp113, and Asp135. Asp135 is an active-site residue. Residues Lys139, Asp171, and 209–212 (TRYE) contribute to the substrate site.

It belongs to the class I-like SAM-binding methyltransferase superfamily. TrmB family.

The catalysed reaction is guanosine(46) in tRNA + S-adenosyl-L-methionine = N(7)-methylguanosine(46) in tRNA + S-adenosyl-L-homocysteine. The protein operates within tRNA modification; N(7)-methylguanine-tRNA biosynthesis. Catalyzes the formation of N(7)-methylguanine at position 46 (m7G46) in tRNA. The chain is tRNA (guanine-N(7)-)-methyltransferase from Rhizobium etli (strain ATCC 51251 / DSM 11541 / JCM 21823 / NBRC 15573 / CFN 42).